Here is a 170-residue protein sequence, read N- to C-terminus: Photosystem II extrinsic protein V (170 aa).

Residues 1-33 (MASLFSTLQRSLKGLLILVPVLIGLVLASPAEA) form the signal peptide. Heme c contacts are provided by Cys70, Cys73, His74, and Met137.

The protein belongs to the cytochrome c family. PsbV subfamily. In terms of assembly, PSII is composed of 1 copy each of membrane proteins PsbA, PsbB, PsbC, PsbD, PsbE, PsbF, PsbH, PsbI, PsbJ, PsbK, PsbL, PsbM, PsbT, PsbX, PsbY, PsbZ, Psb30/Ycf12, peripheral proteins PsbO, CyanoQ (PsbQ), PsbU, PsbV and a large number of cofactors. It forms dimeric complexes. Requires heme c as cofactor.

The protein localises to the cellular thylakoid membrane. One of the extrinsic, lumenal subunits of photosystem II (PSII). PSII is a light-driven water plastoquinone oxidoreductase, using light energy to abstract electrons from H(2)O, generating a proton gradient subsequently used for ATP formation. The extrinsic proteins stabilize the structure of photosystem II oxygen-evolving complex (OEC), the ion environment of oxygen evolution and protect the OEC against heat-induced inactivation. Low-potential cytochrome c that plays a role in the OEC of PSII. The chain is Photosystem II extrinsic protein V from Parasynechococcus marenigrum (strain WH8102).